The sequence spans 273 residues: Large ribosomal subunit protein uL2 (273 aa).

The interval 196-273 (GNSDHGLESS…SSKYIIERRK (78 aa)) is disordered. 2 stretches are compositionally biased toward basic residues: residues 209-220 (GRTRWMGRRPRN) and 255-264 (LKTRAPKKQS).

The protein belongs to the universal ribosomal protein uL2 family. In terms of assembly, part of the 50S ribosomal subunit. Forms a bridge to the 30S subunit in the 70S ribosome.

One of the primary rRNA binding proteins. Required for association of the 30S and 50S subunits to form the 70S ribosome, for tRNA binding and peptide bond formation. It has been suggested to have peptidyltransferase activity; this is somewhat controversial. Makes several contacts with the 16S rRNA in the 70S ribosome. The polypeptide is Large ribosomal subunit protein uL2 (Phocaeicola vulgatus (strain ATCC 8482 / DSM 1447 / JCM 5826 / CCUG 4940 / NBRC 14291 / NCTC 11154) (Bacteroides vulgatus)).